The sequence spans 459 residues: UDP-N-acetylmuramate--L-alanine ligase (459 aa).

118-124 contacts ATP; it reads GTHGKTT.

This sequence belongs to the MurCDEF family.

It localises to the cytoplasm. It catalyses the reaction UDP-N-acetyl-alpha-D-muramate + L-alanine + ATP = UDP-N-acetyl-alpha-D-muramoyl-L-alanine + ADP + phosphate + H(+). The protein operates within cell wall biogenesis; peptidoglycan biosynthesis. Cell wall formation. The chain is UDP-N-acetylmuramate--L-alanine ligase from Lachnospira eligens (strain ATCC 27750 / DSM 3376 / VPI C15-48 / C15-B4) (Eubacterium eligens).